The sequence spans 718 residues: Polyribonucleotide nucleotidyltransferase (718 aa).

Mg(2+)-binding residues include Asp496 and Asp502. A KH domain is found at 563-622; the sequence is PRLLTIKIDPDMIGLVIGPGGKTIKGITEETGAKIDIEDDGTVTISAVDENKAKRARNIV. The S1 motif domain occupies 632 to 700; sequence GDVYAGRVTR…NKGRINLTRL (69 aa).

As to quaternary structure, may form homodimers or higher order multimers. Interacts with RNase E (rne). Mg(2+) is required as a cofactor.

Its subcellular location is the cytoplasm. It carries out the reaction RNA(n+1) + phosphate = RNA(n) + a ribonucleoside 5'-diphosphate. In terms of biological role, involved in mRNA degradation. Catalyzes the phosphorolysis of single-stranded polyribonucleotides processively in the 3'- to 5'-direction. The protein is Polyribonucleotide nucleotidyltransferase of Nostoc sp. (strain PCC 7120 / SAG 25.82 / UTEX 2576).